The following is a 320-amino-acid chain: Chorion protein S36 (320 aa).

The N-terminal stretch at 1 to 18 is a signal peptide; sequence MNCFLFTLFFVAAPLATA. 5 tandem repeats follow at residues 178-181, 258-261, 266-269, 274-277, and alanine 290. The disordered stretch occupies residues 259–320; that stretch reads APAQSYNAAP…YGSAPPASGY (62 aa).

The protein belongs to the chorion protein S36 family.

It is found in the secreted. Its function is as follows. Chorion membrane (egg shell) protein; plays a role in protecting the egg from the environment. In Ceratitis capitata (Mediterranean fruit fly), this protein is Chorion protein S36 (Cp36).